The following is a 752-amino-acid chain: Iron-sulfur clusters transporter ABCB7, mitochondrial (752 aa).

The N-terminal 22 residues, M1–R22, are a transit peptide targeting the mitochondrion. At H23 to V140 the chain is on the mitochondrial matrix side. Positions V140–Q436 constitute an ABC transmembrane type-1 domain. Residues A141 to F161 form a helical membrane-spanning segment. Residues K162–V185 lie on the Mitochondrial intermembrane side of the membrane. A helical transmembrane segment spans residues A186–F206. Residues N207–G259 are Mitochondrial matrix-facing. N6-acetyllysine is present on residues K216 and K251. The chain crosses the membrane as a helical span at residues I260–L280. Residues V281–G290 are Mitochondrial intermembrane-facing. Residues A291–V311 traverse the membrane as a helical segment. Residues T312–S382 are Mitochondrial matrix-facing. R315–R319 lines the glutathione pocket. S336 carries the phosphoserine modification. At Y340 the chain carries Phosphotyrosine. Phosphothreonine is present on T342. N378–Q381 serves as a coordination point for glutathione. A helical transmembrane segment spans residues A383–G403. The Mitochondrial intermembrane segment spans residues T404–D409. A helical membrane pass occupies residues L410–V430. G428 contacts glutathione. The Mitochondrial matrix portion of the chain corresponds to Y431 to C752. The ABC transporter domain occupies V472–H706. ATP-binding positions include Y481 and G505 to R516.

Belongs to the ABC transporter superfamily. ABCB family. Heavy Metal importer (TC 3.A.1.210) subfamily. Homodimer or heterodimer. Interacts with C10orf88/PAAT. Forms a complex with ABCB10 and FECH, where a dimeric FECH bridges ABCB7 and ABCB10 homodimers; this complex may be required for cellular iron homeostasis, mitochondrial function and heme biosynthesis. Interacts with FECH. Interacts with ATP5F1A. Interacts with COX4I1; this interaction allows the regulation of cellular iron homeostasis and cellular reactive oxygen species (ROS) levels in cardiomyocytes.

Its subcellular location is the mitochondrion inner membrane. It carries out the reaction (glutathione)4[2Fe(III)-2S] cluster(in) + ATP + H2O = (glutathione)4[2Fe(III)-2S] cluster(out) + ADP + phosphate + H(+). ATPase activity is stimulated by glutathione. Exports glutathione-coordinated iron-sulfur clusters such as [2Fe-2S]-(GS)4 cluster from the mitochondria to the cytosol in an ATP-dependent manner allowing the assembly of the cytosolic iron-sulfur (Fe/S) cluster-containing proteins and participates in iron homeostasis. Moreover, through a functional complex formed of ABCB7, FECH and ABCB10, also plays a role in the cellular iron homeostasis, mitochondrial function and heme biosynthesis. In cardiomyocytes, regulates cellular iron homeostasis and cellular reactive oxygen species (ROS) levels through its interaction with COX4I1. May also play a role in hematopoiesis. In Homo sapiens (Human), this protein is Iron-sulfur clusters transporter ABCB7, mitochondrial.